A 54-amino-acid polypeptide reads, in one-letter code: Large ribosomal subunit protein uL15 (54 aa).

The segment covering 1 to 30 (MPSRLRXTRKLRGHVSHGHGRIGKHRKHPG) has biased composition (basic residues). A disordered region spans residues 1 to 42 (MPSRLRXTRKLRGHVSHGHGRIGKHRKHPGGRGNAGGMHHHR). A (3S)-3-hydroxyhistidine modification is found at histidine 39. The residue at position 47 (lysine 47) is an N6-acetyllysine.

This sequence belongs to the universal ribosomal protein uL15 family. Component of the large ribosomal subunit. Hydroxylated on His-39 by MINA.

It is found in the cytoplasm. In terms of biological role, component of the large ribosomal subunit. The ribosome is a large ribonucleoprotein complex responsible for the synthesis of proteins in the cell. The protein is Large ribosomal subunit protein uL15 (RPL27A) of Sus scrofa (Pig).